The chain runs to 62 residues: Protein YnfQ (62 aa).

This sequence belongs to the YmcF/YnqF peptide family.

This is Protein YnfQ from Escherichia coli (strain K12).